Here is a 502-residue protein sequence, read N- to C-terminus: Lipoyl synthase, apicoplast (502 aa).

An N-terminal signal peptide occupies residues M1–P16. [4Fe-4S] cluster contacts are provided by C192, C197, C203, C218, C222, C225, and S433. Positions W204–K422 constitute a Radical SAM core domain.

It belongs to the radical SAM superfamily. Lipoyl synthase family. Requires [4Fe-4S] cluster as cofactor.

The protein resides in the plastid. It localises to the apicoplast. It carries out the reaction [[Fe-S] cluster scaffold protein carrying a second [4Fe-4S](2+) cluster] + N(6)-octanoyl-L-lysyl-[protein] + 2 oxidized [2Fe-2S]-[ferredoxin] + 2 S-adenosyl-L-methionine + 4 H(+) = [[Fe-S] cluster scaffold protein] + N(6)-[(R)-dihydrolipoyl]-L-lysyl-[protein] + 4 Fe(3+) + 2 hydrogen sulfide + 2 5'-deoxyadenosine + 2 L-methionine + 2 reduced [2Fe-2S]-[ferredoxin]. The protein operates within protein modification; protein lipoylation via endogenous pathway; protein N(6)-(lipoyl)lysine from octanoyl-[acyl-carrier-protein]: step 2/2. Its function is as follows. Catalyzes the radical-mediated insertion of two sulfur atoms into the C-6 and C-8 positions of the octanoyl moiety bound to the lipoyl domains of lipoate-dependent enzymes, thereby converting the octanoylated domains into lipoylated derivatives. This Plasmodium yoelii yoelii protein is Lipoyl synthase, apicoplast.